Reading from the N-terminus, the 314-residue chain is L-lactate dehydrogenase 2 (314 aa).

NAD(+)-binding positions include V16, D37, K42, Y68, and 82-83 (GL). Residues Q85, R91, and 123–126 (NPVD) each bind substrate. NAD(+) is bound by residues 121–123 (ATN) and S146. 151–154 (DSAR) provides a ligand contact to substrate. Beta-D-fructose 1,6-bisphosphate is bound by residues R156 and H171. H178 acts as the Proton acceptor in catalysis. Y223 is subject to Phosphotyrosine. Position 232 (T232) interacts with substrate.

Belongs to the LDH/MDH superfamily. LDH family. Homotetramer.

The protein resides in the cytoplasm. The catalysed reaction is (S)-lactate + NAD(+) = pyruvate + NADH + H(+). Its pathway is fermentation; pyruvate fermentation to lactate; (S)-lactate from pyruvate: step 1/1. Its activity is regulated as follows. Allosterically activated by fructose 1,6-bisphosphate (FBP). Its function is as follows. Catalyzes the conversion of lactate to pyruvate. This Bacillus cereus (strain ATCC 10987 / NRS 248) protein is L-lactate dehydrogenase 2.